The sequence spans 242 residues: UPF0246 protein SPP_1571 (242 aa).

Belongs to the UPF0246 family.

The protein is UPF0246 protein SPP_1571 of Streptococcus pneumoniae (strain P1031).